The following is a 193-amino-acid chain: Adenine phosphoribosyltransferase (193 aa).

Belongs to the purine/pyrimidine phosphoribosyltransferase family. In terms of assembly, homodimer.

Its subcellular location is the cytoplasm. The catalysed reaction is AMP + diphosphate = 5-phospho-alpha-D-ribose 1-diphosphate + adenine. It participates in purine metabolism; AMP biosynthesis via salvage pathway; AMP from adenine: step 1/1. Functionally, catalyzes a salvage reaction resulting in the formation of AMP, that is energically less costly than de novo synthesis. In Bifidobacterium longum (strain DJO10A), this protein is Adenine phosphoribosyltransferase.